Here is a 188-residue protein sequence, read N- to C-terminus: Putative manganese efflux pump MntP (188 aa).

6 helical membrane-spanning segments follow: residues 3–23, 41–61, 62–82, 107–129, 143–163, and 168–188; these read LSAT…ASIG, LIFG…GMLA, SQFI…FLGG, LLVT…LAFL, ATFI…PLLG, and ILGG…HFAG.

The protein belongs to the MntP (TC 9.B.29) family.

The protein localises to the cell inner membrane. In terms of biological role, probably functions as a manganese efflux pump. The sequence is that of Putative manganese efflux pump MntP from Klebsiella pneumoniae subsp. pneumoniae (strain ATCC 700721 / MGH 78578).